The primary structure comprises 192 residues: Peptidyl-tRNA hydrolase (192 aa).

Residue Y17 coordinates tRNA. H22 acts as the Proton acceptor in catalysis. Positions 67, 69, and 115 each coordinate tRNA.

Belongs to the PTH family. In terms of assembly, monomer.

The protein resides in the cytoplasm. It carries out the reaction an N-acyl-L-alpha-aminoacyl-tRNA + H2O = an N-acyl-L-amino acid + a tRNA + H(+). Its function is as follows. Hydrolyzes ribosome-free peptidyl-tRNAs (with 1 or more amino acids incorporated), which drop off the ribosome during protein synthesis, or as a result of ribosome stalling. Functionally, catalyzes the release of premature peptidyl moieties from peptidyl-tRNA molecules trapped in stalled 50S ribosomal subunits, and thus maintains levels of free tRNAs and 50S ribosomes. The protein is Peptidyl-tRNA hydrolase of Methylobacillus flagellatus (strain ATCC 51484 / DSM 6875 / VKM B-1610 / KT).